Consider the following 560-residue polypeptide: MDIKRTILIAALAVVSYVMVLKWNDDYGQAALPTQNTAASTVAPGLPDGVPAGNNGASADVPSANAESSPAELAPVALSKDLIRVKTDVLELAIDPVGGDIVQLNLPKYPRRQDHPNIPFQLFDNGGERVYLAQSGLTGTDGPDARASGRPLYAAEQKSYQLADGQEQLVVDLKFSDNGVNYIKRFSFKRGEYDLNVSYLIDNQSGQAWSGNMFAQLKRDASGDPSSSTATGTATYLGAALWTASEPYKKVSMKDIDKGSLKENVSGGWVAWLQHYFVTAWIPAKSDNNVVQTRKDSQGNYIIGYTGPVISVPAGGKVETSALLYAGPKIQSKLKELSPGLELTVDYGFLWFIAQPIFWLLQHIHSLLGNWGWSIIVLTMLIKGLFFPLSAASYRSMARMRAVAPKLAALKERFGDDRQKMSQAMMELYKKEKINPLGGCLPILVQMPVFLALYWVLLESVEMRQAPWILWITDLSIKDPFFILPIIMGATMFIQQRLNPTPPDPMQAKVMKMMPIIFTFFFLWFPAGLVLYWVVNNCLSISQQWYITRRIEAATKKAAA.

Residues 1–21 (MDIKRTILIAALAVVSYVMVL) form a helical membrane-spanning segment. Residues 42–66 (VAPGLPDGVPAGNNGASADVPSANA) are disordered. The next 5 helical transmembrane spans lie at 341-361 (LELT…FWLL), 367-387 (LLGN…GLFF), 437-457 (LGGC…YWVL), 468-488 (WILW…PIIM), and 515-535 (PIIF…YWVV).

It belongs to the OXA1/ALB3/YidC family. Type 1 subfamily. Interacts with the Sec translocase complex via SecD. Specifically interacts with transmembrane segments of nascent integral membrane proteins during membrane integration.

The protein resides in the cell inner membrane. Functionally, required for the insertion and/or proper folding and/or complex formation of integral membrane proteins into the membrane. Involved in integration of membrane proteins that insert both dependently and independently of the Sec translocase complex, as well as at least some lipoproteins. Aids folding of multispanning membrane proteins. This chain is Membrane protein insertase YidC, found in Pseudomonas putida (strain ATCC 700007 / DSM 6899 / JCM 31910 / BCRC 17059 / LMG 24140 / F1).